Consider the following 536-residue polypeptide: Cytochrome c oxidase subunit 1 (536 aa).

The helical transmembrane segment at 19 to 39 threads the bilayer; that stretch reads IGMTYLGFGMLSAMMGTGMSV. Position 44 (glutamate 44) interacts with Ca(2+). Histidine 67 is a binding site for Fe(II)-heme a. 6 helical membrane passes run 69–89, 103–123, 152–172, 188–208, 240–260, and 273–293; these read LLMM…NFFL, LNNI…CSVL, AMFA…NFMV, PLFA…LPVL, LFWF…FGVM, and FGEM…FLVW. Cu cation is bound at residue histidine 246. Positions 246–250 form a cross-link, 1'-histidyl-3'-tyrosine (His-Tyr); it reads HPEVY. Tyrosine 250 contacts O2. Residues histidine 295 and histidine 296 each coordinate Cu cation. The next 2 membrane-spanning stretches (helical) occupy residues 315–335 and 341–361; these read MVIA…IYGG and VPML…LTGV. The Mg(2+) site is built by histidine 373 and aspartate 374. Residue histidine 381 participates in heme a3 binding. Histidine 383 serves as a coordination point for Fe(II)-heme a. The next 2 membrane-spanning stretches (helical) occupy residues 388–408 and 418–438; these read MGAL…MFGL and HFWL…FLGL. Proline 446 contributes to the Ca(2+) binding site. Residues 461–481 traverse the membrane as a helical segment; the sequence is MGSAMSVMSVLVGLKSVLVQL.

This sequence belongs to the heme-copper respiratory oxidase family. As to quaternary structure, component of the cytochrome c oxidase (complex IV, CIV), a multisubunit enzyme composed of a catalytic core of 3 subunits and several supernumerary subunits. The complex exists as a monomer or a dimer and forms supercomplexes (SCs) in the inner mitochondrial membrane with ubiquinol-cytochrome c oxidoreductase (cytochrome b-c1 complex, complex III, CIII). It depends on heme as a cofactor. The cofactor is Cu cation.

It localises to the mitochondrion inner membrane. It catalyses the reaction 4 Fe(II)-[cytochrome c] + O2 + 8 H(+)(in) = 4 Fe(III)-[cytochrome c] + 2 H2O + 4 H(+)(out). It participates in energy metabolism; oxidative phosphorylation. In terms of biological role, component of the cytochrome c oxidase, the last enzyme in the mitochondrial electron transport chain which drives oxidative phosphorylation. The respiratory chain contains 3 multisubunit complexes succinate dehydrogenase (complex II, CII), ubiquinol-cytochrome c oxidoreductase (cytochrome b-c1 complex, complex III, CIII) and cytochrome c oxidase (complex IV, CIV), that cooperate to transfer electrons derived from NADH and succinate to molecular oxygen, creating an electrochemical gradient over the inner membrane that drives transmembrane transport and the ATP synthase. Cytochrome c oxidase is the component of the respiratory chain that catalyzes the reduction of oxygen to water. Electrons originating from reduced cytochrome c in the intermembrane space (IMS) are transferred via the dinuclear copper A center (CU(A)) of subunit 2 and heme A of subunit 1 to the active site in subunit 1, a binuclear center (BNC) formed by heme A3 and copper B (CU(B)). The BNC reduces molecular oxygen to 2 water molecules using 4 electrons from cytochrome c in the IMS and 4 protons from the mitochondrial matrix. The polypeptide is Cytochrome c oxidase subunit 1 (COX1) (Debaryomyces hansenii (strain ATCC 36239 / CBS 767 / BCRC 21394 / JCM 1990 / NBRC 0083 / IGC 2968) (Yeast)).